We begin with the raw amino-acid sequence, 394 residues long: Phosphopentomutase (394 aa).

Positions 14, 287, 292, 328, 329, and 340 each coordinate Mn(2+).

Belongs to the phosphopentomutase family. Mn(2+) serves as cofactor.

The protein localises to the cytoplasm. The catalysed reaction is 2-deoxy-alpha-D-ribose 1-phosphate = 2-deoxy-D-ribose 5-phosphate. It carries out the reaction alpha-D-ribose 1-phosphate = D-ribose 5-phosphate. Its pathway is carbohydrate degradation; 2-deoxy-D-ribose 1-phosphate degradation; D-glyceraldehyde 3-phosphate and acetaldehyde from 2-deoxy-alpha-D-ribose 1-phosphate: step 1/2. In terms of biological role, isomerase that catalyzes the conversion of deoxy-ribose 1-phosphate (dRib-1-P) and ribose 1-phosphate (Rib-1-P) to deoxy-ribose 5-phosphate (dRib-5-P) and ribose 5-phosphate (Rib-5-P), respectively. This chain is Phosphopentomutase, found in Listeria innocua serovar 6a (strain ATCC BAA-680 / CLIP 11262).